We begin with the raw amino-acid sequence, 125 residues long: Large ribosomal subunit protein bL21 (125 aa).

It belongs to the bacterial ribosomal protein bL21 family. As to quaternary structure, part of the 50S ribosomal subunit. Contacts protein L20.

Functionally, this protein binds to 23S rRNA in the presence of protein L20. This Synechococcus sp. (strain CC9902) protein is Large ribosomal subunit protein bL21.